The primary structure comprises 229 residues: Potassium/proton antiporter CemA (229 aa).

A run of 3 helical transmembrane segments spans residues 6–26 (AFIPFLYLASIVFLPWWISLS), 114–134 (ILCFVILSGYSILGNEELLII), and 189–209 (IISGLVSTFPVILDTIFKYWI).

Belongs to the CemA family.

The protein resides in the plastid. Its subcellular location is the chloroplast inner membrane. The enzyme catalyses K(+)(in) + H(+)(out) = K(+)(out) + H(+)(in). In terms of biological role, contributes to K(+)/H(+) antiport activity by supporting proton efflux to control proton extrusion and homeostasis in chloroplasts in a light-dependent manner to modulate photosynthesis. Prevents excessive induction of non-photochemical quenching (NPQ) under continuous-light conditions. Indirectly promotes efficient inorganic carbon uptake into chloroplasts. This chain is Potassium/proton antiporter CemA, found in Carica papaya (Papaya).